The primary structure comprises 177 residues: Large ribosomal subunit protein uL6 (177 aa).

Belongs to the universal ribosomal protein uL6 family. Part of the 50S ribosomal subunit.

Functionally, this protein binds to the 23S rRNA, and is important in its secondary structure. It is located near the subunit interface in the base of the L7/L12 stalk, and near the tRNA binding site of the peptidyltransferase center. This chain is Large ribosomal subunit protein uL6, found in Pseudoalteromonas atlantica (strain T6c / ATCC BAA-1087).